We begin with the raw amino-acid sequence, 321 residues long: Fe-S cluster assembly protein DRE2 (321 aa).

The interval 1–161 (MPAPVPPTAF…STPVTLSGAR (161 aa)) is N-terminal SAM-like domain. A disordered region spans residues 123–168 (PSPSTLAYTSPSAPSLPTVASDPSPAPSSSTPVTLSGARPLQLRRN). The span at 139 to 156 (PTVASDPSPAPSSSTPVT) shows a compositional bias: low complexity. The interval 162 to 197 (PLQLRRNGDKARKAALWAIDSPLIPDGGKSLLTPAD) is linker. Residues C203, C219, C222, and C224 each coordinate [2Fe-2S] cluster. The fe-S binding site A stretch occupies residues 203 to 224 (CVFPAENGKPVKRRRACKDCTC). [4Fe-4S] cluster is bound by residues C285, C288, C296, and C299. 2 consecutive short sequence motifs (cx2C motif) follow at residues 285 to 288 (CGSC) and 296 to 299 (CSSC). The segment at 285–299 (CGSCYLGDAFRCSSC) is fe-S binding site B.

It belongs to the anamorsin family. Monomer. Interacts with TAH18. Interacts with MIA40. [2Fe-2S] cluster is required as a cofactor. The cofactor is [4Fe-4S] cluster.

The protein resides in the cytoplasm. Its subcellular location is the mitochondrion intermembrane space. Functionally, component of the cytosolic iron-sulfur (Fe-S) protein assembly (CIA) machinery required for the maturation of extramitochondrial Fe-S proteins. Part of an electron transfer chain functioning in an early step of cytosolic Fe-S biogenesis, facilitating the de novo assembly of a [4Fe-4S] cluster on the scaffold complex CFD1-NBP35. Electrons are transferred to DRE2 from NADPH via the FAD- and FMN-containing protein TAH18. TAH18-DRE2 are also required for the assembly of the diferric tyrosyl radical cofactor of ribonucleotide reductase (RNR), probably by providing electrons for reduction during radical cofactor maturation in the catalytic small subunit RNR2. This chain is Fe-S cluster assembly protein DRE2, found in Cryptococcus neoformans var. neoformans serotype D (strain B-3501A) (Filobasidiella neoformans).